Here is a 247-residue protein sequence, read N- to C-terminus: ATP synthase subunit a, chloroplastic (247 aa).

A run of 5 helical transmembrane segments spans residues 38-58, 95-115, 134-154, 199-219, and 220-240; these read QVLITSWVVIAILLGSATLAV, VPFIGTMFLFIFVSNWSGALL, INTTVALALLTSVAYFYAGLT, LVVVVLVSLVPSVVPIPVMFL, and GLFTSGIQALIFATLAAAYIG.

This sequence belongs to the ATPase A chain family. In terms of assembly, F-type ATPases have 2 components, CF(1) - the catalytic core - and CF(0) - the membrane proton channel. CF(1) has five subunits: alpha(3), beta(3), gamma(1), delta(1), epsilon(1). CF(0) has four main subunits: a, b, b' and c.

The protein resides in the plastid. Its subcellular location is the chloroplast thylakoid membrane. In terms of biological role, key component of the proton channel; it plays a direct role in the translocation of protons across the membrane. The polypeptide is ATP synthase subunit a, chloroplastic (Guizotia abyssinica (Niger)).